Here is a 426-residue protein sequence, read N- to C-terminus: Adenylosuccinate synthetase (426 aa).

Residues 12–18 and 40–42 contribute to the GTP site; these read GDEGKGK and GHT. Asp-13 acts as the Proton acceptor in catalysis. The Mg(2+) site is built by Asp-13 and Gly-40. IMP-binding positions include 13-16, 38-41, Thr-131, Arg-145, Gln-226, Thr-241, and Arg-305; these read DEGK and NAGH. His-41 functions as the Proton donor in the catalytic mechanism. Position 301 to 307 (301 to 307) interacts with substrate; that stretch reads ATTGRKR. GTP is bound by residues Arg-307, 333 to 335, and 415 to 417; these read KLD and SVG.

It belongs to the adenylosuccinate synthetase family. In terms of assembly, homodimer. Mg(2+) is required as a cofactor.

The protein resides in the cytoplasm. It catalyses the reaction IMP + L-aspartate + GTP = N(6)-(1,2-dicarboxyethyl)-AMP + GDP + phosphate + 2 H(+). It functions in the pathway purine metabolism; AMP biosynthesis via de novo pathway; AMP from IMP: step 1/2. Its function is as follows. Plays an important role in the de novo pathway of purine nucleotide biosynthesis. Catalyzes the first committed step in the biosynthesis of AMP from IMP. This chain is Adenylosuccinate synthetase, found in Nitratidesulfovibrio vulgaris (strain DP4) (Desulfovibrio vulgaris).